The primary structure comprises 94 residues: Integration host factor subunit beta (94 aa).

This sequence belongs to the bacterial histone-like protein family. Heterodimer of an alpha and a beta chain.

Its function is as follows. This protein is one of the two subunits of integration host factor, a specific DNA-binding protein that functions in genetic recombination as well as in transcriptional and translational control. In Actinobacillus succinogenes (strain ATCC 55618 / DSM 22257 / CCUG 43843 / 130Z), this protein is Integration host factor subunit beta.